The following is a 117-amino-acid chain: Ig heavy chain V region 23 (117 aa).

Residues 1-19 (MGWSCIILFLVAAANGVHS) form the signal peptide. The segment at 20–49 (QVQLQQPGTELVKPGASVKLSCKASGYTFT) is framework-1. Cys-41 and Cys-115 are oxidised to a cystine. The tract at residues 50-54 (SYWMH) is complementarity-determining-1. Positions 55 to 68 (WVKQRPGQGLEWIG) are framework-2. Residues 69–85 (NINPGNGGTNYNEKFKS) are complementarity-determining-2. Residues 86–117 (KVTLTVDKSSSTAYTQLSSLTSEDSAVYYCAR) are framework-3.

In Mus musculus (Mouse), this protein is Ig heavy chain V region 23.